An 817-amino-acid polypeptide reads, in one-letter code: Phosphoenolpyruvate synthase (817 aa).

Catalysis depends on histidine 442, which acts as the Tele-phosphohistidine intermediate. Residues arginine 540, arginine 587, glutamate 684, glycine 706, threonine 707, asparagine 708, and aspartate 709 each coordinate substrate. Residue glutamate 684 participates in Mg(2+) binding. Mg(2+) is bound at residue aspartate 709. Cysteine 756 (proton donor) is an active-site residue.

Belongs to the PEP-utilizing enzyme family. In terms of assembly, homooctamer. Mg(2+) serves as cofactor.

The catalysed reaction is pyruvate + ATP + H2O = phosphoenolpyruvate + AMP + phosphate + 2 H(+). It functions in the pathway carbohydrate biosynthesis; gluconeogenesis. Functionally, catalyzes the phosphorylation of pyruvate to phosphoenolpyruvate. In Pyrococcus furiosus (strain ATCC 43587 / DSM 3638 / JCM 8422 / Vc1), this protein is Phosphoenolpyruvate synthase (ppsA).